We begin with the raw amino-acid sequence, 118 residues long: Small ribosomal subunit protein uS13 (118 aa).

Positions 93–118 (RGLPVRGQRTKTNARTRKGPRKPIRK) are disordered.

The protein belongs to the universal ribosomal protein uS13 family. In terms of assembly, part of the 30S ribosomal subunit. Forms a loose heterodimer with protein S19. Forms two bridges to the 50S subunit in the 70S ribosome.

In terms of biological role, located at the top of the head of the 30S subunit, it contacts several helices of the 16S rRNA. In the 70S ribosome it contacts the 23S rRNA (bridge B1a) and protein L5 of the 50S subunit (bridge B1b), connecting the 2 subunits; these bridges are implicated in subunit movement. Contacts the tRNAs in the A and P-sites. The sequence is that of Small ribosomal subunit protein uS13 from Pseudomonas fluorescens (strain Pf0-1).